The chain runs to 177 residues: MKLPKEGDFITIQSYKHDGRLHRTWRDTMVLKTTENAVIGVNDHTLVTEADGRRWVTREPAIVYFHKKYWFNIIAMIRDNGISYYCNLASPYVLDQEALKYIDYDLDVKVFADGEKKLLDVDEYEIHKKEMHYSPDIDYILKEHVKILVDWINNGKGPFSQSYVNIWYKRYLELRSR.

Arg-23 (proton donor) is an active-site residue. Asn-87, Asp-103, Asp-105, Asp-107, Asp-120, and Glu-123 together coordinate Mg(2+).

It belongs to the Ntdp family. Mg(2+) is required as a cofactor.

The catalysed reaction is a ribonucleoside 5'-triphosphate + H2O = a ribonucleoside 5'-diphosphate + phosphate + H(+). The enzyme catalyses a ribonucleoside 5'-diphosphate + H2O = a ribonucleoside 5'-phosphate + phosphate + H(+). Functionally, has nucleoside phosphatase activity towards nucleoside triphosphates and nucleoside diphosphates. This is Nucleoside triphosphate/diphosphate phosphatase from Streptococcus thermophilus (strain ATCC BAA-491 / LMD-9).